Here is a 253-residue protein sequence, read N- to C-terminus: Proteasome subunit alpha (253 aa).

A disordered region spans residues 229–253; that stretch reads ADESQSYIDDIEDAADDSDDDDDEE. Over residues 237-253 the composition is skewed to acidic residues; the sequence is DDIEDAADDSDDDDDEE.

This sequence belongs to the peptidase T1A family. As to quaternary structure, the 20S proteasome core is composed of 14 alpha and 14 beta subunits that assemble into four stacked heptameric rings, resulting in a barrel-shaped structure. The two inner rings, each composed of seven catalytic beta subunits, are sandwiched by two outer rings, each composed of seven alpha subunits. The catalytic chamber with the active sites is on the inside of the barrel. Has a gated structure, the ends of the cylinder being occluded by the N-termini of the alpha-subunits. Is capped at one or both ends by the proteasome regulatory ATPase, PAN.

It is found in the cytoplasm. With respect to regulation, the formation of the proteasomal ATPase PAN-20S proteasome complex, via the docking of the C-termini of PAN into the intersubunit pockets in the alpha-rings, triggers opening of the gate for substrate entry. Interconversion between the open-gate and close-gate conformations leads to a dynamic regulation of the 20S proteasome proteolysis activity. Component of the proteasome core, a large protease complex with broad specificity involved in protein degradation. In Halobacterium salinarum (strain ATCC 29341 / DSM 671 / R1), this protein is Proteasome subunit alpha.